We begin with the raw amino-acid sequence, 549 residues long: Pyrophosphate--fructose 6-phosphate 1-phosphotransferase (549 aa).

Diphosphate is bound at residue glycine 78. Aspartate 172 contributes to the Mg(2+) binding site. Substrate-binding positions include 200–202, 239–240, 247–249, glutamate 308, and 421–424; these read TID, KY, MGR, and YEGR. Aspartate 202 functions as the Proton acceptor in the catalytic mechanism.

It belongs to the phosphofructokinase type A (PFKA) family. PPi-dependent PFK group II subfamily. Clade 'Long' sub-subfamily. As to quaternary structure, homodimer. It depends on Mg(2+) as a cofactor.

It is found in the cytoplasm. It carries out the reaction beta-D-fructose 6-phosphate + diphosphate = beta-D-fructose 1,6-bisphosphate + phosphate + H(+). The protein operates within carbohydrate degradation; glycolysis; D-glyceraldehyde 3-phosphate and glycerone phosphate from D-glucose: step 3/4. Non-allosteric. Catalyzes the phosphorylation of D-fructose 6-phosphate, the first committing step of glycolysis. Uses inorganic phosphate (PPi) as phosphoryl donor instead of ATP like common ATP-dependent phosphofructokinases (ATP-PFKs), which renders the reaction reversible, and can thus function both in glycolysis and gluconeogenesis. Consistently, PPi-PFK can replace the enzymes of both the forward (ATP-PFK) and reverse (fructose-bisphosphatase (FBPase)) reactions. The sequence is that of Pyrophosphate--fructose 6-phosphate 1-phosphotransferase from Porphyromonas gingivalis (Bacteroides gingivalis).